Consider the following 106-residue polypeptide: Integration host factor subunit beta (106 aa).

The tract at residues 57–106 (PARAGRNPRTGEHVPVEQKSVPFFKTGKEMRERLNRDGLDGATPPSPPAA) is disordered. Residues 82–95 (TGKEMRERLNRDGL) show a composition bias toward basic and acidic residues.

Belongs to the bacterial histone-like protein family. As to quaternary structure, heterodimer of an alpha and a beta chain.

This protein is one of the two subunits of integration host factor, a specific DNA-binding protein that functions in genetic recombination as well as in transcriptional and translational control. This chain is Integration host factor subunit beta, found in Afipia carboxidovorans (strain ATCC 49405 / DSM 1227 / KCTC 32145 / OM5) (Oligotropha carboxidovorans).